The sequence spans 315 residues: Tetraacyldisaccharide 4'-kinase (315 aa).

45–52 (SVGGSGKT) is an ATP binding site.

It belongs to the LpxK family.

It catalyses the reaction a lipid A disaccharide + ATP = a lipid IVA + ADP + H(+). Its pathway is glycolipid biosynthesis; lipid IV(A) biosynthesis; lipid IV(A) from (3R)-3-hydroxytetradecanoyl-[acyl-carrier-protein] and UDP-N-acetyl-alpha-D-glucosamine: step 6/6. In terms of biological role, transfers the gamma-phosphate of ATP to the 4'-position of a tetraacyldisaccharide 1-phosphate intermediate (termed DS-1-P) to form tetraacyldisaccharide 1,4'-bis-phosphate (lipid IVA). The sequence is that of Tetraacyldisaccharide 4'-kinase from Aquifex aeolicus (strain VF5).